The following is a 103-amino-acid chain: Large ribosomal subunit protein bL21 (103 aa).

The protein belongs to the bacterial ribosomal protein bL21 family. As to quaternary structure, part of the 50S ribosomal subunit. Contacts protein L20.

Functionally, this protein binds to 23S rRNA in the presence of protein L20. This chain is Large ribosomal subunit protein bL21, found in Shewanella sediminis (strain HAW-EB3).